The following is a 263-amino-acid chain: Probable septum site-determining protein MinC (263 aa).

The disordered stretch occupies residues 107 to 159 (LPPSGARERPLDIKDSAPRKPAEEPSPSAGEARPEPAKAEEKPADPVSRPTKV). Basic and acidic residues-rich tracts occupy residues 112–129 (ARERPLDIKDSAPRKPAE) and 138–150 (ARPEPAKAEEKPA).

It belongs to the MinC family. In terms of assembly, interacts with MinD and FtsZ.

Functionally, cell division inhibitor that blocks the formation of polar Z ring septums. Rapidly oscillates between the poles of the cell to destabilize FtsZ filaments that have formed before they mature into polar Z rings. Prevents FtsZ polymerization. The sequence is that of Probable septum site-determining protein MinC from Pseudomonas aeruginosa (strain UCBPP-PA14).